The sequence spans 872 residues: MKQLSSAQVRQMWLDFWATKGHSVEPSVSLVPVNDPTLLWINSGVATLKKYFDGTIIPENPRITNAQKAIRTNDIENVGKTARHHTMFEMLGNFSIGDYFRDEAITWAYELLTSPEWFDFPAEKLYMTYYPDDKDSYNRWIEVGVDPSHLIPIEDNFWEIGAGPSGPDTEIFFDRGEAFDPENIGLRLLAEDIENDRYIEIWNIVLSQFNADPAVPRSEYKELPHKNIDTGAGLERLVAVIQGAKTNFETDLFMPIIREVEKLSGKVYDQDGDNMSFKVIADHIRSLSFAIGDGALPGNEGRGYVLRRLLRRASMHGQKLGINEPFLYKLVPTVGKIMESYYPEVLEKRDFIEKIVKSEEESFARTLHSGQHFAQGIVADLKEKGQSVIAGQDVFKLYDTYGFPVELTEEIAEEAGMTVDREGFEAAMKEQQERARASAVKGGSMGMQNETLQNITVESVFNHNASQLSSKLVAIVADNAEVEAVSEGTTSLIFAETPFYAEMGGQVADHGQILDESGKVVATVTNVQKAPNGQALHTVEVLAPLALNQEYTLAIDSNRRHRVMKNHTATHLLHAALHNILGNHATQAGSLNEVEFLRFDFTHFQAVTAEELRAIEQQVNEKIWEALEVKTVETDIDTAKEMGAMALFGEKYGKEVRVVTIGDYSIELCGGTHVGNTSEIGLFKIVKEEGIGSGTRRILAVTGKEAFEAYREQEDALKAVAATLKAPQVKEVPHKVEGLQEQLRQLQKENAELKEKAAAAAAGDIFKDVKEVNGHRYIASQVSVSDAGALRTFADNWKQKDYSDLLVLVAAIGDKVNVLVASKTKDLHAGNLVKELAPIIDGRGGGKPDMAMAGGSNQPKIQELLDAVAGKL.

4 residues coordinate Zn(2+): His-567, His-571, Cys-669, and His-673.

This sequence belongs to the class-II aminoacyl-tRNA synthetase family. Zn(2+) serves as cofactor.

It is found in the cytoplasm. It carries out the reaction tRNA(Ala) + L-alanine + ATP = L-alanyl-tRNA(Ala) + AMP + diphosphate. Catalyzes the attachment of alanine to tRNA(Ala) in a two-step reaction: alanine is first activated by ATP to form Ala-AMP and then transferred to the acceptor end of tRNA(Ala). Also edits incorrectly charged Ser-tRNA(Ala) and Gly-tRNA(Ala) via its editing domain. In Streptococcus pneumoniae (strain Hungary19A-6), this protein is Alanine--tRNA ligase.